The chain runs to 313 residues: GTP cyclohydrolase MptA (313 aa).

The protein belongs to the GTP cyclohydrolase IV family. In terms of assembly, homodimer. Fe(2+) is required as a cofactor.

The enzyme catalyses GTP + H2O = 7,8-dihydroneopterin 2',3'-cyclic phosphate + formate + diphosphate + H(+). The protein operates within cofactor biosynthesis; 5,6,7,8-tetrahydromethanopterin biosynthesis. Inhibited by GTP concentrations greater than 0.3 mM and by 2-amino-5-formylamino-6-ribofuranosylamino-4(3H)-pyrimidinone 5'-phosphate (fapyGMP). Partial inhibition is observed when 2 mM GMP, dGTP, or 7-methyl-GTP was included along with 2 mM GTP. Functionally, converts GTP to 7,8-dihydro-D-neopterin 2',3'-cyclic phosphate, the first intermediate in the biosynthesis of coenzyme methanopterin. It is also able to utilize a variety of GTP analogs as substrates, including GDP, beta,gamma-methylene-GTP and GTP-[gamma-thio]. This chain is GTP cyclohydrolase MptA (mptA), found in Methanocaldococcus jannaschii (strain ATCC 43067 / DSM 2661 / JAL-1 / JCM 10045 / NBRC 100440) (Methanococcus jannaschii).